Reading from the N-terminus, the 226-residue chain is Ribonuclease 3 (226 aa).

Residues 7 to 129 (LPRLCRTLGY…IIGAIYLDSD (123 aa)) form the RNase III domain. Glu-42 serves as a coordination point for Mg(2+). Asp-46 is a catalytic residue. Residues Asp-115 and Glu-118 each contribute to the Mg(2+) site. Glu-118 is an active-site residue. In terms of domain architecture, DRBM spans 156–226 (DAKTLLQEYL…AAQVLELLKK (71 aa)).

This sequence belongs to the ribonuclease III family. As to quaternary structure, homodimer. It depends on Mg(2+) as a cofactor.

It is found in the cytoplasm. It carries out the reaction Endonucleolytic cleavage to 5'-phosphomonoester.. In terms of biological role, digests double-stranded RNA. Involved in the processing of primary rRNA transcript to yield the immediate precursors to the large and small rRNAs (23S and 16S). Processes some mRNAs, and tRNAs when they are encoded in the rRNA operon. Processes pre-crRNA and tracrRNA of type II CRISPR loci if present in the organism. This Shewanella sp. (strain MR-7) protein is Ribonuclease 3.